The chain runs to 238 residues: SPEG neighbor protein (238 aa).

In terms of domain architecture, IQ spans 29-55 (QSAAIRIQASYRGHRSRKELREKGPPR). Ig-like domains follow at residues 54 to 143 (PRVL…ARIL) and 147 to 236 (PTKI…ARVD).

The chain is SPEG neighbor protein from Homo sapiens (Human).